A 463-amino-acid chain; its full sequence is Major capsid protein (463 aa).

The protein belongs to the NCLDV major capsid protein family. In terms of assembly, homomultimer.

It is found in the virion. Functionally, major capsid protein that self assembles to form a T=133 or T=147 icosahedral capsid. This chain is Major capsid protein, found in Dryophytes versicolor (chameleon treefrog).